The chain runs to 368 residues: Interferon-stimulated 20 kDa exonuclease-like 2 (368 aa).

Disordered regions lie at residues 33–107 (FLEQ…APSK) and 127–187 (PKTK…PTVP). Polar residues predominate over residues 42 to 54 (KKNQPPNKVSKLN). Over residues 77–96 (KKKEAAASKRDSERSKDKKA) the composition is skewed to basic and acidic residues. A compositionally biased stretch (basic residues) spans 131–145 (STQKKGSKKKSLKKK). The region spanning 194-368 (MVAIDCEMVG…QHLAQNPPEN (175 aa)) is the Exonuclease domain.

Its subcellular location is the nucleus. It is found in the nucleolus. Functionally, 3'-&gt; 5'-exoribonuclease involved in ribosome biogenesis in the processing of the 12S pre-rRNA. Displays a strong specificity for a 3'-end containing a free hydroxyl group. This chain is Interferon-stimulated 20 kDa exonuclease-like 2 (Isg20l2), found in Mus musculus (Mouse).